The sequence spans 187 residues: Putative AgrB-like protein 1 (187 aa).

A run of 5 helical transmembrane segments spans residues 29–49 (VVIV…IAGI), 50–70 (LGYF…KPFI), 81–98 (CFIA…LVTF), 103–120 (LFSI…IYNK), and 149–169 (ILFL…TITW).

It belongs to the AgrB family.

The protein localises to the cell membrane. Its function is as follows. May be involved in the proteolytic processing of a quorum sensing system signal molecule precursor. The sequence is that of Putative AgrB-like protein 1 from Clostridium perfringens (strain 13 / Type A).